The primary structure comprises 116 residues: Appetite-regulating hormone (116 aa).

A signal peptide spans 1–23 (MPAPRTICSLLLLSMLWMDLAMA). A lipid anchor (O-decanoyl serine; alternate) is attached at serine 26. Serine 26 carries the O-hexanoyl serine; alternate lipid modification. Residue serine 26 is the site of O-octanoyl serine; alternate attachment. Positions 29–67 (SPEHQKLQRKEPKKPSGRLKPRALEGQFDPDVGSQEEGA) are disordered. Basic and acidic residues predominate over residues 31 to 42 (EHQKLQRKEPKK). A propeptide spans 51–74 (ALEGQFDPDVGSQEEGAEDELEIR) (removed in mature form). Position 97 is a leucine amide (leucine 97). The propeptide at 98-116 (GKFLQDILWEEAEETLADE) is removed in mature form.

It belongs to the motilin family. O-octanoylated by GOAT/MBOAT4. O-octanoylation is essential for ghrelin activity. In terms of processing, amidation of Leu-97 is essential for obestatin activity.

It localises to the secreted. In terms of biological role, ghrelin is the ligand for growth hormone secretagogue receptor type 1 (GHSR). Induces the release of growth hormone from the pituitary. Has an appetite-stimulating effect, induces adiposity and stimulates gastric acid secretion. Involved in growth regulation. Its function is as follows. Obestatin may be the ligand for GPR39. May have an appetite-reducing effect resulting in decreased food intake. May reduce gastric emptying activity and jejunal motility. This Capra hircus (Goat) protein is Appetite-regulating hormone (GHRL).